Here is a 436-residue protein sequence, read N- to C-terminus: GDP-mannose 6-dehydrogenase (436 aa).

Residues Tyr10, Val11, Asp30, Lys35, Thr86, and Thr124 each coordinate NAD(+). The GDP-alpha-D-mannuronate site is built by Glu161, Lys210, Asn214, His217, Asn225, Tyr256, Tyr257, Arg259, and Gly265. Cys268 is an active-site residue. Lys271 contacts NAD(+). A GDP-alpha-D-mannuronate-binding site is contributed by Lys324. An NAD(+)-binding site is contributed by Arg331.

It belongs to the UDP-glucose/GDP-mannose dehydrogenase family.

It carries out the reaction GDP-alpha-D-mannose + 2 NAD(+) + H2O = GDP-alpha-D-mannuronate + 2 NADH + 3 H(+). It functions in the pathway glycan biosynthesis; alginate biosynthesis. Functionally, catalyzes the oxidation of guanosine diphospho-D-mannose (GDP-D-mannose) to GDP-D-mannuronic acid, a precursor for alginate polymerization. The alginate layer causes a mucoid phenotype and is essential for cyst formation. The sequence is that of GDP-mannose 6-dehydrogenase (algD) from Azotobacter vinelandii.